Here is a 269-residue protein sequence, read N- to C-terminus: Ribonuclease HII (269 aa).

The RNase H type-2 domain maps to 79-269 (TYLAGADEVG…SFLKNILNTF (191 aa)). A divalent metal cation contacts are provided by D85, E86, and D182.

This sequence belongs to the RNase HII family. Mn(2+) is required as a cofactor. The cofactor is Mg(2+).

It localises to the cytoplasm. It carries out the reaction Endonucleolytic cleavage to 5'-phosphomonoester.. Its function is as follows. Endonuclease that specifically degrades the RNA of RNA-DNA hybrids. This is Ribonuclease HII from Clostridium novyi (strain NT).